Here is a 340-residue protein sequence, read N- to C-terminus: Annexin A2-B (340 aa).

The tract at residues 2-25 (ALIHEILGKLSLEGNQSSSRQSKL) is P10 binding site. S27 carries the phosphoserine; by PKC modification. Annexin repeat units lie at residues 34-105 (FDAE…GLIK), 106-177 (TRPQ…ALAK), 190-262 (EKID…NLVQ), and 266-337 (NKPL…NLCG).

The protein belongs to the annexin family. As to quaternary structure, tetramer of 2 light chains (p10 proteins) and 2 heavy chains (p36 proteins). As to expression, adult brain, heart, striated muscle, liver, kidney, and very high levels in skin.

Its subcellular location is the secreted. The protein localises to the extracellular space. It localises to the extracellular matrix. It is found in the basement membrane. Calcium-regulated membrane-binding protein whose affinity for calcium is greatly enhanced by anionic phospholipids. It binds two calcium ions with high affinity. In Xenopus laevis (African clawed frog), this protein is Annexin A2-B (anxa2-b).